Reading from the N-terminus, the 209-residue chain is MRAPHKDEIASHELPATPMDPALAANREGKIKVATIGLCGCWGCTLSFLDMDERLLPLLEKVTLLRSSLTDIKRIPERCAIGFVEGGVSSEENIETLEHFRENCDILISVGACAVWGGVPAMRNVFELKDCLAEAYVNSATAVPGAKAVVPFHPDIPRITTKVYPCHEVVKMDYFIPGCPPDGDAIFKVLDDLVNGRPFDLPSSINRYD.

In terms of assembly, tetramer of an alpha and a gamma subunits (flavin-containing dimer), and a delta and a nickel-containing beta subunits (hydrogenase dimer). [4Fe-4S] cluster serves as cofactor. Requires [3Fe-4S] cluster as cofactor. The cofactor is [2Fe-2S] cluster. FMN is required as a cofactor. It depends on Ni(2+) as a cofactor.

The protein resides in the cytoplasm. The enzyme catalyses H2 + NAD(+) = NADH + H(+). The polypeptide is NAD-reducing hydrogenase HoxS subunit delta (hoxY) (Cupriavidus necator (strain ATCC 17699 / DSM 428 / KCTC 22496 / NCIMB 10442 / H16 / Stanier 337) (Ralstonia eutropha)).